Here is a 225-residue protein sequence, read N- to C-terminus: Triosephosphate isomerase (225 aa).

A substrate-binding site is contributed by 9–11; sequence NMK. The Electrophile role is filled by histidine 93. Glutamate 141 acts as the Proton acceptor in catalysis. Substrate is bound by residues isoleucine 146, glycine 181, and 202–203; that span reads AS.

This sequence belongs to the triosephosphate isomerase family. As to quaternary structure, homotetramer; dimer of dimers.

It is found in the cytoplasm. It carries out the reaction D-glyceraldehyde 3-phosphate = dihydroxyacetone phosphate. It participates in carbohydrate biosynthesis; gluconeogenesis. The protein operates within carbohydrate degradation; glycolysis; D-glyceraldehyde 3-phosphate from glycerone phosphate: step 1/1. Its function is as follows. Involved in the gluconeogenesis. Catalyzes stereospecifically the conversion of dihydroxyacetone phosphate (DHAP) to D-glyceraldehyde-3-phosphate (G3P). This is Triosephosphate isomerase from Caldivirga maquilingensis (strain ATCC 700844 / DSM 13496 / JCM 10307 / IC-167).